Consider the following 352-residue polypeptide: MAQTEAMAEIKQQALVDINEAQNEKALQDVKVKYLGKKGSVTGLMKHMKDLPNEEKPAYGQQVNEVRQTIEKEIQARHELLGNEQLEQQLKEEKIDVTLPSRKIAIGAKHPLTRTIEEIEDLFLGLGYEIVDGFEVEQDYYNFEALNLPKSHPARDMQDSFYITDEILMRTHTSPVQARTMEKRNGEGPVKILCPGKVYRRDSDDATHSHQFTQIEGLVVDENIKMSDLKGTLELLAKQLFGEDREIRLRPSYFPFTEPSVEVDVSCFKCKGEGCNVCKHTGWIEILGAGMVHPNVLEMAGFDSNKYTGFAFGMGPDRIAMLKYGIEDIRHFYTNDVRFLSQFKAVEDRGEK.

Glu258 serves as a coordination point for Mg(2+).

The protein belongs to the class-II aminoacyl-tRNA synthetase family. Phe-tRNA synthetase alpha subunit type 1 subfamily. As to quaternary structure, tetramer of two alpha and two beta subunits. It depends on Mg(2+) as a cofactor.

It localises to the cytoplasm. The catalysed reaction is tRNA(Phe) + L-phenylalanine + ATP = L-phenylalanyl-tRNA(Phe) + AMP + diphosphate + H(+). This Staphylococcus saprophyticus subsp. saprophyticus (strain ATCC 15305 / DSM 20229 / NCIMB 8711 / NCTC 7292 / S-41) protein is Phenylalanine--tRNA ligase alpha subunit.